The sequence spans 216 residues: Probable ubiquitin-conjugating enzyme E2 ECU01_1010 (216 aa).

A compositionally biased stretch (basic residues) spans 1-10; sequence MFKPSAHRRL. The interval 1-29 is disordered; that stretch reads MFKPSAHRRLPREDDIIQEDDEDGPLWPS. The UBC core domain occupies 29-196; that stretch reads SALRRLSNEE…VIRIAREEDE (168 aa). Cys120 serves as the catalytic Glycyl thioester intermediate.

This sequence belongs to the ubiquitin-conjugating enzyme family.

It carries out the reaction S-ubiquitinyl-[E1 ubiquitin-activating enzyme]-L-cysteine + [E2 ubiquitin-conjugating enzyme]-L-cysteine = [E1 ubiquitin-activating enzyme]-L-cysteine + S-ubiquitinyl-[E2 ubiquitin-conjugating enzyme]-L-cysteine.. It participates in protein modification; protein ubiquitination. In terms of biological role, catalyzes the covalent attachment of ubiquitin to other proteins so as to signal them for selective protein degradation. Involved in the formation of multiubiquitin chains. The polypeptide is Probable ubiquitin-conjugating enzyme E2 ECU01_1010 (Encephalitozoon cuniculi (strain GB-M1) (Microsporidian parasite)).